Here is a 122-residue protein sequence, read N- to C-terminus: Large ribosomal subunit protein uL14 (122 aa).

Belongs to the universal ribosomal protein uL14 family. As to quaternary structure, part of the 50S ribosomal subunit. Forms a cluster with proteins L3 and L19. In the 70S ribosome, L14 and L19 interact and together make contacts with the 16S rRNA in bridges B5 and B8.

Its function is as follows. Binds to 23S rRNA. Forms part of two intersubunit bridges in the 70S ribosome. This is Large ribosomal subunit protein uL14 from Mycolicibacterium vanbaalenii (strain DSM 7251 / JCM 13017 / BCRC 16820 / KCTC 9966 / NRRL B-24157 / PYR-1) (Mycobacterium vanbaalenii).